The primary structure comprises 156 residues: Small ribosomal subunit protein bS16 (156 aa).

Positions glutamate 114–lysine 156 are disordered. A compositionally biased stretch (basic and acidic residues) spans alanine 130–aspartate 139. Positions aspartate 143–lysine 156 are enriched in low complexity.

The protein belongs to the bacterial ribosomal protein bS16 family.

The protein is Small ribosomal subunit protein bS16 of Rhodococcus erythropolis (strain PR4 / NBRC 100887).